A 344-amino-acid polypeptide reads, in one-letter code: Ferredoxin--NADP reductase (344 aa).

7 residues coordinate FAD: Asp36, Gln44, Tyr49, Val89, Phe127, Asp291, and Thr332.

Belongs to the ferredoxin--NADP reductase type 2 family. In terms of assembly, homodimer. The cofactor is FAD.

It catalyses the reaction 2 reduced [2Fe-2S]-[ferredoxin] + NADP(+) + H(+) = 2 oxidized [2Fe-2S]-[ferredoxin] + NADPH. The sequence is that of Ferredoxin--NADP reductase from Beijerinckia indica subsp. indica (strain ATCC 9039 / DSM 1715 / NCIMB 8712).